The following is a 38-amino-acid chain: Beta-defensin 1 (38 aa).

Intrachain disulfides connect cysteine 5-cysteine 34, cysteine 12-cysteine 27, and cysteine 17-cysteine 35.

It belongs to the beta-defensin family. As to quaternary structure, monomer. Homodimer. Neutrophilic granules.

The protein resides in the secreted. Its subcellular location is the membrane. Functionally, has bactericidal activity. Active against E.coli ML35 but not against S.aureus 502A. May act as a ligand for C-C chemokine receptor CCR6. Positively regulates the sperm motility and bactericidal activity in a CCR6-dependent manner. Binds to CCR6 and triggers Ca2+ mobilization in the sperm which is important for its motility. This is Beta-defensin 1 (DEFB1) from Bos taurus (Bovine).